A 216-amino-acid polypeptide reads, in one-letter code: Penicillin-binding protein activator LpoB (216 aa).

The N-terminal stretch at 1-20 (MIKNLSRYALVTAFALFLSG) is a signal peptide. The N-palmitoyl cysteine moiety is linked to residue cysteine 21. Cysteine 21 carries S-diacylglycerol cysteine lipidation. The interval 28 to 77 (QPAPVDEAKPGTEQPAQPTQPVPTVPSVPTVPAQPGPIEHPDQTSQPAPR) is disordered.

Belongs to the LpoB family. Interacts with PBP1b.

Its subcellular location is the cell outer membrane. Functionally, regulator of peptidoglycan synthesis that is essential for the function of penicillin-binding protein 1B (PBP1b). The chain is Penicillin-binding protein activator LpoB from Enterobacter sp. (strain 638).